Reading from the N-terminus, the 491-residue chain is Probable cytosol aminopeptidase (491 aa).

The Mn(2+) site is built by lysine 261 and aspartate 266. Residue lysine 273 is part of the active site. 3 residues coordinate Mn(2+): aspartate 284, aspartate 343, and glutamate 345. Residue arginine 347 is part of the active site.

The protein belongs to the peptidase M17 family. Mn(2+) serves as cofactor.

It localises to the cytoplasm. It carries out the reaction Release of an N-terminal amino acid, Xaa-|-Yaa-, in which Xaa is preferably Leu, but may be other amino acids including Pro although not Arg or Lys, and Yaa may be Pro. Amino acid amides and methyl esters are also readily hydrolyzed, but rates on arylamides are exceedingly low.. It catalyses the reaction Release of an N-terminal amino acid, preferentially leucine, but not glutamic or aspartic acids.. Presumably involved in the processing and regular turnover of intracellular proteins. Catalyzes the removal of unsubstituted N-terminal amino acids from various peptides. The protein is Probable cytosol aminopeptidase of Stenotrophomonas maltophilia (strain K279a).